Reading from the N-terminus, the 357-residue chain is Uroporphyrinogen decarboxylase (357 aa).

Residues 27-31, D77, Y154, T209, and H327 each bind substrate; that span reads RQAGR.

This sequence belongs to the uroporphyrinogen decarboxylase family. As to quaternary structure, homodimer.

The protein resides in the cytoplasm. It carries out the reaction uroporphyrinogen III + 4 H(+) = coproporphyrinogen III + 4 CO2. Its pathway is porphyrin-containing compound metabolism; protoporphyrin-IX biosynthesis; coproporphyrinogen-III from 5-aminolevulinate: step 4/4. Its function is as follows. Catalyzes the decarboxylation of four acetate groups of uroporphyrinogen-III to yield coproporphyrinogen-III. This Proteus mirabilis (strain HI4320) protein is Uroporphyrinogen decarboxylase.